Consider the following 330-residue polypeptide: Short chain dehydrogenase yanD (330 aa).

NADP(+)-binding residues include K57, D86, N113, Y204, and K208. Catalysis depends on Y204, which acts as the Proton donor. Residue K208 is the Lowers pKa of active site Tyr of the active site.

The protein belongs to the short-chain dehydrogenases/reductases (SDR) family.

Its pathway is secondary metabolite biosynthesis; terpenoid biosynthesis. In terms of biological role, short chain dehydrogenase; part of the gene cluster that mediates the biosynthesis of yanuthone D, a fungal isoprenoid epoxycyclohexenone that acts as an antibiotic against fungi and bacteria. The first step of the pathway is the synthesis of 6-methylsalicylic acid (6-MSA) by the polyketide synthase yanA. 6-MSA is then converted to m-cresol by the decarboxylase yanB. The cytochrome P450 monooxygenase yanC then catalyzes the oxidation of m-cresol to toluquinol. Epoxidation of toluquinol is then performed by the short chain dehydrogenase yanD, with the help of yanE, and a further prenylation by yanG leads to 7-deacetoxyyanuthone A. The next step is the hydroxylation of C-22 of 7-deacetoxyyanuthone A by the cytochrome P450 monooxygenase yanH to yield 22-deacetylyanuthone A. O-Mevalon transferase yanI then attaches mevalon to the hydroxyl group of 22-deacetylyanuthone A to produce yanuthone E. Finally, the FAD-dependent monooxygenase yanF oxidizes the hydroxyl group at C15 of yanuthone E to form yanuthone D. Furthermore, several branching points in the pathway lead to the production of yanuthones F and G from 7-deacetoxyyanuthone A; yanuthones H and I from 22-deacetylyanuthone A; and yanuthone J from yanuthone E. YanD is also involved in the synthesis of yanuthone X1 which does not have 6-methylsalicylic acid (6-MSA) as precursor. This is Short chain dehydrogenase yanD from Aspergillus niger (strain ATCC 1015 / CBS 113.46 / FGSC A1144 / LSHB Ac4 / NCTC 3858a / NRRL 328 / USDA 3528.7).